Reading from the N-terminus, the 452-residue chain is Imidazoleglycerol-phosphate dehydratase (452 aa).

Residues 1–233 (MASPVQALLL…VGASVVLTPG (233 aa)) form a unknown activity region. The imidazoleglycerol-phosphate dehydratase stretch occupies residues 234-452 (LGELLDLVPA…GVPSTKGVLA (219 aa)).

It belongs to the imidazoleglycerol-phosphate dehydratase family.

The enzyme catalyses D-erythro-1-(imidazol-4-yl)glycerol 3-phosphate = 3-(imidazol-4-yl)-2-oxopropyl phosphate + H2O. Its pathway is amino-acid biosynthesis; L-histidine biosynthesis; L-histidine from 5-phospho-alpha-D-ribose 1-diphosphate: step 6/9. The polypeptide is Imidazoleglycerol-phosphate dehydratase (HIS3) (Phytophthora nicotianae (Potato buckeye rot agent)).